A 93-amino-acid chain; its full sequence is Small integral membrane protein 36 (93 aa).

A helical membrane pass occupies residues Leu14–Leu34. A disordered region spans residues Ser70 to Val93.

The protein localises to the membrane. The sequence is that of Small integral membrane protein 36 from Mus musculus (Mouse).